The primary structure comprises 210 residues: FMN-dependent NADH:quinone oxidoreductase (210 aa).

FMN contacts are provided by residues 17–19 (SRS), 102–105 (MWNL), and 148–151 (SCGG).

This sequence belongs to the azoreductase type 1 family. As to quaternary structure, homodimer. FMN is required as a cofactor.

The catalysed reaction is 2 a quinone + NADH + H(+) = 2 a 1,4-benzosemiquinone + NAD(+). It carries out the reaction N,N-dimethyl-1,4-phenylenediamine + anthranilate + 2 NAD(+) = 2-(4-dimethylaminophenyl)diazenylbenzoate + 2 NADH + 2 H(+). Its function is as follows. Quinone reductase that provides resistance to thiol-specific stress caused by electrophilic quinones. Functionally, also exhibits azoreductase activity. Catalyzes the reductive cleavage of the azo bond in aromatic azo compounds to the corresponding amines. This Trichlorobacter lovleyi (strain ATCC BAA-1151 / DSM 17278 / SZ) (Geobacter lovleyi) protein is FMN-dependent NADH:quinone oxidoreductase.